A 51-amino-acid polypeptide reads, in one-letter code: 2,3,4,5-tetrahydropyridine-2,6-dicarboxylate N-succinyltransferase (51 aa).

The protein belongs to the transferase hexapeptide repeat family. In terms of assembly, homotrimer.

Its subcellular location is the cytoplasm. It catalyses the reaction (S)-2,3,4,5-tetrahydrodipicolinate + succinyl-CoA + H2O = (S)-2-succinylamino-6-oxoheptanedioate + CoA. The protein operates within amino-acid biosynthesis; L-lysine biosynthesis via DAP pathway; LL-2,6-diaminopimelate from (S)-tetrahydrodipicolinate (succinylase route): step 1/3. This Klebsiella oxytoca protein is 2,3,4,5-tetrahydropyridine-2,6-dicarboxylate N-succinyltransferase (dapD).